The following is a 345-amino-acid chain: Protein arginine N-methyltransferase 1 (345 aa).

The SAM-dependent MTase PRMT-type domain occupies 24–345 (ADYYFDSYSH…VKNTQQYRMR (322 aa)). H37, R46, G70, E92, and E121 together coordinate S-adenosyl-L-methionine. Residues E136 and E145 contribute to the active site.

The protein belongs to the class I-like SAM-binding methyltransferase superfamily. Protein arginine N-methyltransferase family. Post-translationally, phosphorylated during flagellum resorption.

The protein localises to the nucleus. It localises to the cell projection. Its subcellular location is the cilium. It is found in the flagellum. The catalysed reaction is L-arginyl-[protein] + S-adenosyl-L-methionine = N(omega)-methyl-L-arginyl-[protein] + S-adenosyl-L-homocysteine + H(+). The enzyme catalyses L-arginyl-[protein] + 2 S-adenosyl-L-methionine = N(omega),N(omega)-dimethyl-L-arginyl-[protein] + 2 S-adenosyl-L-homocysteine + 2 H(+). In terms of biological role, arginine methyltransferase that methylates (mono and asymmetric dimethylation) the guanidino nitrogens of arginyl residues present in target proteins. Mediates asymmetric dimethylation of components of the axoneme during flagellum resorption, such as CCDC40/FAP172, CCDC65/FAP250, RSP1, RSP2, RPS5, RSP6, and tektin. The protein is Protein arginine N-methyltransferase 1 (PRMT1) of Chlamydomonas reinhardtii (Chlamydomonas smithii).